Here is a 265-residue protein sequence, read N- to C-terminus: Urease accessory protein UreH (265 aa).

It belongs to the UreD family. As to quaternary structure, ureH, UreF and UreG form a complex that acts as a GTP-hydrolysis-dependent molecular chaperone, activating the urease apoprotein by helping to assemble the nickel containing metallocenter of UreC. The UreE protein probably delivers the nickel.

The protein resides in the cytoplasm. Required for maturation of urease via the functional incorporation of the urease nickel metallocenter. The chain is Urease accessory protein UreH from Helicobacter pylori (strain P12).